The chain runs to 185 residues: Ribosome-recycling factor (185 aa).

It belongs to the RRF family.

It localises to the cytoplasm. In terms of biological role, responsible for the release of ribosomes from messenger RNA at the termination of protein biosynthesis. May increase the efficiency of translation by recycling ribosomes from one round of translation to another. This Enterobacter sp. (strain 638) protein is Ribosome-recycling factor.